Reading from the N-terminus, the 423-residue chain is Glutamyl-tRNA(Gln) amidotransferase subunit A (423 aa).

The segment at 1–20 is disordered; the sequence is MSHNAFITEETIEPTDDGPL. A compositionally biased stretch (acidic residues) spans 10–19; that stretch reads ETIEPTDDGP. Residues lysine 28 and serine 103 each act as charge relay system in the active site. The segment at 75–108 is disordered; the sequence is EFGMGTTTETSAFGPTENPAAEGRVPGGSSGGSA. The Acyl-ester intermediate role is filled by serine 127. Residues 183–206 are disordered; the sequence is DERDGTTREPPAGQPTYADAADGD.

Belongs to the amidase family. GatA subfamily. As to quaternary structure, heterotrimer of A, B and C subunits.

The catalysed reaction is L-glutamyl-tRNA(Gln) + L-glutamine + ATP + H2O = L-glutaminyl-tRNA(Gln) + L-glutamate + ADP + phosphate + H(+). In terms of biological role, allows the formation of correctly charged Gln-tRNA(Gln) through the transamidation of misacylated Glu-tRNA(Gln) in organisms which lack glutaminyl-tRNA synthetase. The reaction takes place in the presence of glutamine and ATP through an activated gamma-phospho-Glu-tRNA(Gln). In Natronomonas pharaonis (strain ATCC 35678 / DSM 2160 / CIP 103997 / JCM 8858 / NBRC 14720 / NCIMB 2260 / Gabara) (Halobacterium pharaonis), this protein is Glutamyl-tRNA(Gln) amidotransferase subunit A.